A 193-amino-acid chain; its full sequence is FMN-dependent NADH:quinone oxidoreductase 1 (193 aa).

FMN-binding positions include serine 9, 15–17, and 85–88; these read SIS and MYNF.

This sequence belongs to the azoreductase type 1 family. In terms of assembly, homodimer. FMN is required as a cofactor.

It catalyses the reaction 2 a quinone + NADH + H(+) = 2 a 1,4-benzosemiquinone + NAD(+). It carries out the reaction N,N-dimethyl-1,4-phenylenediamine + anthranilate + 2 NAD(+) = 2-(4-dimethylaminophenyl)diazenylbenzoate + 2 NADH + 2 H(+). Quinone reductase that provides resistance to thiol-specific stress caused by electrophilic quinones. In terms of biological role, also exhibits azoreductase activity. Catalyzes the reductive cleavage of the azo bond in aromatic azo compounds to the corresponding amines. This chain is FMN-dependent NADH:quinone oxidoreductase 1, found in Xanthomonas axonopodis pv. citri (strain 306).